Reading from the N-terminus, the 194-residue chain is MIIKDVEFIKSATKPSEYTEPLFLEVAFAGRSNVGKSSLINTLINRKSLVKTSSKPGCTQLINFFLLNGNLSLVDLPGYGYAKVSKKIRAQWGPMIERYLTVRETLRAIVLLIDMRREPQREELDLINWFTAHAIPYRIVLTKADKLSKTKQQKNISAIAKGLGMEQDRLIAFSSKTRLGRDRLWQELDTMLNP.

One can recognise an EngB-type G domain in the interval 22–194 (LFLEVAFAGR…WQELDTMLNP (173 aa)). GTP contacts are provided by residues 30–37 (GRSNVGKS), 57–61 (GCTQL), 75–78 (DLPG), 142–145 (TKAD), and 173–175 (FSS). Mg(2+)-binding residues include Ser37 and Thr59.

Belongs to the TRAFAC class TrmE-Era-EngA-EngB-Septin-like GTPase superfamily. EngB GTPase family. It depends on Mg(2+) as a cofactor.

Its function is as follows. Necessary for normal cell division and for the maintenance of normal septation. The chain is Probable GTP-binding protein EngB from Desulforapulum autotrophicum (strain ATCC 43914 / DSM 3382 / VKM B-1955 / HRM2) (Desulfobacterium autotrophicum).